A 451-amino-acid polypeptide reads, in one-letter code: Serine/threonine-protein kinase VRK3 (451 aa).

2 disordered regions span residues 28–61 (KHEG…SKKV) and 74–125 (LPSE…MTAS). Residues 32 to 45 (SQSFVKPFTSSSQG) are compositionally biased toward polar residues. The Nuclear localization signal motif lies at 47–62 (RRKTNTSSETSSKKVK). Ser-53, Ser-57, Ser-80, Ser-81, Ser-88, and Ser-106 each carry phosphoserine. Over residues 78 to 91 (GKSSGSEDTLSTSG) the composition is skewed to polar residues. Residues 98–116 (SRSPTPRSSPQTTRQSPQT) are compositionally biased toward low complexity. The Protein kinase domain maps to 123–434 (TASLEALPVG…TLRNELEALL (312 aa)).

Belongs to the protein kinase superfamily. CK1 Ser/Thr protein kinase family. VRK subfamily. In terms of assembly, interacts with DUSP3. Interacts with RAN. Interacts with HSP70/HSPA1A. Post-translationally, phosphorylated at Ser-106 by CDK5; leading to protection of the cell against H2O2-induced apoptosis. In terms of processing, ubiquitinated by RNF144A.

It is found in the nucleus. Its subcellular location is the cytoplasm. It catalyses the reaction L-seryl-[protein] + ATP = O-phospho-L-seryl-[protein] + ADP + H(+). Functionally, plays a role in the regulation of the cell cycle by phosphorylating the nuclear envelope protein barrier-to-autointegration factor/BAF that is required for disassembly and reassembly, respectively, of the nuclear envelope during mitosis. Under normal physiological conditions, negatively regulates ERK activity along with VHR phosphatase in the nucleus, causing timely and transient action of ERK. Stress conditions activate CDK5 which phosphorylates VRK3 to increase VHR phosphatase activity and suppress prolonged ERK activation that causes cell death. For example, upon glutamate induction, promotes nuclear localization of HSP70/HSPA1A to inhibit ERK activation via VHR phosphatase. The protein is Serine/threonine-protein kinase VRK3 (VRK3) of Bos taurus (Bovine).